Here is a 500-residue protein sequence, read N- to C-terminus: Cytochrome P450 726A27 (500 aa).

A helical; Signal-anchor for type II membrane protein transmembrane segment spans residues 7-27 (IPSYPIIFSFFIFIFMLIKIW). Cysteine 440 contributes to the heme binding site.

The protein belongs to the cytochrome P450 family. The cofactor is heme. Expressed in mature seeds.

It localises to the membrane. The catalysed reaction is (-)-casbene + reduced [NADPH--hemoprotein reductase] + O2 = 4-hydroxycasbene + oxidized [NADPH--hemoprotein reductase] + H2O + H(+). It catalyses the reaction 8-hydroxycasbene + reduced [NADPH--hemoprotein reductase] + O2 = 4,8-dihydroxycasbene + oxidized [NADPH--hemoprotein reductase] + H2O + H(+). The enzyme catalyses 4,8-dihydroxycasbene + reduced [NADPH--hemoprotein reductase] + O2 = 4,5,8-trihydroxycasbene + oxidized [NADPH--hemoprotein reductase] + H2O + H(+). It participates in secondary metabolite biosynthesis; terpenoid biosynthesis. Its function is as follows. Involved in the biosynthesis of macrocyclic lathyrane type diterpenoids (also called Euphorbia factors) natural products, including the cyclization route from casbene to jolkinol C, a precursor for ingenol mebutate that is used to treat actinic keratosis, a precancerous skin condition. Catalyzes the hydroxylation of (-)-casbene and 8-hydroxycasbene to produce 4-hydroxycasbene and 4,8-dihydroxycasbene, respectively. The protein is Cytochrome P450 726A27 of Euphorbia lathyris (Caper spurge).